Reading from the N-terminus, the 96-residue chain is Co-chaperonin GroES (96 aa).

This sequence belongs to the GroES chaperonin family. As to quaternary structure, heptamer of 7 subunits arranged in a ring. Interacts with the chaperonin GroEL.

Its subcellular location is the cytoplasm. In terms of biological role, together with the chaperonin GroEL, plays an essential role in assisting protein folding. The GroEL-GroES system forms a nano-cage that allows encapsulation of the non-native substrate proteins and provides a physical environment optimized to promote and accelerate protein folding. GroES binds to the apical surface of the GroEL ring, thereby capping the opening of the GroEL channel. The protein is Co-chaperonin GroES of Actinobacillus succinogenes (strain ATCC 55618 / DSM 22257 / CCUG 43843 / 130Z).